The chain runs to 386 residues: Succinate--CoA ligase [ADP-forming] subunit beta (386 aa).

The ATP-grasp domain maps to lysine 9–glutamate 244. ATP-binding positions include lysine 46, glycine 53–glycine 55, glutamate 99, cysteine 102, and glutamate 107. Positions 199 and 213 each coordinate Mg(2+). Substrate contacts are provided by residues asparagine 264 and glycine 321–methionine 323.

It belongs to the succinate/malate CoA ligase beta subunit family. As to quaternary structure, heterotetramer of two alpha and two beta subunits. Mg(2+) serves as cofactor.

It carries out the reaction succinate + ATP + CoA = succinyl-CoA + ADP + phosphate. The catalysed reaction is GTP + succinate + CoA = succinyl-CoA + GDP + phosphate. Its pathway is carbohydrate metabolism; tricarboxylic acid cycle; succinate from succinyl-CoA (ligase route): step 1/1. Functionally, succinyl-CoA synthetase functions in the citric acid cycle (TCA), coupling the hydrolysis of succinyl-CoA to the synthesis of either ATP or GTP and thus represents the only step of substrate-level phosphorylation in the TCA. The beta subunit provides nucleotide specificity of the enzyme and binds the substrate succinate, while the binding sites for coenzyme A and phosphate are found in the alpha subunit. The sequence is that of Succinate--CoA ligase [ADP-forming] subunit beta from Bacillus thuringiensis (strain Al Hakam).